The primary structure comprises 340 residues: Nuclear hormone receptor family member nhr-197 (340 aa).

Residues 1 to 75 (MNCVVCSGRA…VGMTLAPLND (75 aa)) constitute a DNA-binding region (nuclear receptor). NR C4-type zinc fingers lie at residues 3 to 23 (CVVC…CFAC) and 39 to 58 (CKRI…CRAC). Positions 98–337 (KNDKNYSHFV…KRIMQDLFSN (240 aa)) constitute an NR LBD domain.

It belongs to the nuclear hormone receptor family.

It localises to the nucleus. Orphan nuclear receptor. This is Nuclear hormone receptor family member nhr-197 (nhr-197) from Caenorhabditis elegans.